A 343-amino-acid polypeptide reads, in one-letter code: Cytoplasmic tRNA 2-thiolation protein 1 (343 aa).

It belongs to the TtcA family. CTU1/NCS6/ATPBD3 subfamily.

Its subcellular location is the cytoplasm. It functions in the pathway tRNA modification; 5-methoxycarbonylmethyl-2-thiouridine-tRNA biosynthesis. Its function is as follows. Plays a central role in 2-thiolation of mcm(5)S(2)U at tRNA wobble positions of tRNA(Lys), tRNA(Glu) and tRNA(Gln). Directly binds tRNAs and probably acts by catalyzing adenylation of tRNAs, an intermediate required for 2-thiolation. It is unclear whether it acts as a sulfurtransferase that transfers sulfur from thiocarboxylated URM1 onto the uridine of tRNAs at wobble position. In Drosophila virilis (Fruit fly), this protein is Cytoplasmic tRNA 2-thiolation protein 1.